The chain runs to 160 residues: Phosphopantetheine adenylyltransferase (160 aa).

Threonine 10 lines the substrate pocket. ATP is bound by residues 10–11 and histidine 18; that span reads TF. Lysine 42, leucine 74, and arginine 88 together coordinate substrate. Residues 89–91, glutamate 99, and 124–130 each bind ATP; these read GLR and NSFISST.

The protein belongs to the bacterial CoaD family. As to quaternary structure, homohexamer. It depends on Mg(2+) as a cofactor.

It is found in the cytoplasm. It catalyses the reaction (R)-4'-phosphopantetheine + ATP + H(+) = 3'-dephospho-CoA + diphosphate. Its pathway is cofactor biosynthesis; coenzyme A biosynthesis; CoA from (R)-pantothenate: step 4/5. Functionally, reversibly transfers an adenylyl group from ATP to 4'-phosphopantetheine, yielding dephospho-CoA (dPCoA) and pyrophosphate. This is Phosphopantetheine adenylyltransferase from Aeromonas salmonicida (strain A449).